Here is a 190-residue protein sequence, read N- to C-terminus: Putative protein p47 (190 aa).

This chain is Putative protein p47 (47), found in Escherichia coli (Bacteriophage APSE-1).